The sequence spans 1021 residues: DNA-directed RNA polymerase 2B, chloroplastic/mitochondrial (1021 aa).

Residues 315–337 are disordered; that stretch reads KKQKAEKDKQKEDGEHVTQEQEK. Active-site residues include Asp-722, Lys-797, and Asp-954.

Belongs to the phage and mitochondrial RNA polymerase family.

It localises to the plastid. The protein resides in the chloroplast. The protein localises to the mitochondrion. It catalyses the reaction RNA(n) + a ribonucleoside 5'-triphosphate = RNA(n+1) + diphosphate. DNA-dependent RNA polymerase catalyzes the transcription of DNA into RNA using the four ribonucleoside triphosphates as substrates. The protein is DNA-directed RNA polymerase 2B, chloroplastic/mitochondrial (RPOT2-TOM) of Nicotiana tabacum (Common tobacco).